A 141-amino-acid chain; its full sequence is Hemoglobin subunit alpha (141 aa).

In terms of domain architecture, Globin spans 1 to 141 (VLSEADKSNV…VSTVLTSKYR (141 aa)). H58 lines the O2 pocket. Residue H87 participates in heme b binding.

The protein belongs to the globin family. In terms of assembly, heterotetramer of two alpha chains and two beta chains. When oxygenated in vitro, exists virtually only in polymeric form. When deoxygenated, forms tetramers, octamers and larger polymers. Red blood cells.

Involved in oxygen transport from the lung to the various peripheral tissues. The protein is Hemoglobin subunit alpha of Paleosuchus palpebrosus (Cuvier's smooth-fronted caiman).